The sequence spans 225 residues: Uracil-DNA glycosylase 1 (225 aa).

Asp-68 functions as the Proton acceptor in the catalytic mechanism.

This sequence belongs to the uracil-DNA glycosylase (UDG) superfamily. UNG family.

It localises to the cytoplasm. The catalysed reaction is Hydrolyzes single-stranded DNA or mismatched double-stranded DNA and polynucleotides, releasing free uracil.. Its function is as follows. Excises uracil residues from the DNA which can arise as a result of misincorporation of dUMP residues by DNA polymerase or due to deamination of cytosine. The sequence is that of Uracil-DNA glycosylase 1 (ung1) from Streptomyces avermitilis (strain ATCC 31267 / DSM 46492 / JCM 5070 / NBRC 14893 / NCIMB 12804 / NRRL 8165 / MA-4680).